The chain runs to 360 residues: Peptide chain release factor 1 (360 aa).

An N5-methylglutamine modification is found at Q235. Residues 285-295 (RQAAEQTDMRR) show a composition bias toward basic and acidic residues. The tract at residues 285 to 309 (RQAAEQTDMRRNLLGSGDRSDKIRT) is disordered.

The protein belongs to the prokaryotic/mitochondrial release factor family. Methylated by PrmC. Methylation increases the termination efficiency of RF1.

Its subcellular location is the cytoplasm. Peptide chain release factor 1 directs the termination of translation in response to the peptide chain termination codons UAG and UAA. This is Peptide chain release factor 1 from Haemophilus influenzae (strain 86-028NP).